Consider the following 360-residue polypeptide: D-xylose 1-dehydrogenase [NADP(+)] (360 aa).

The protein belongs to the Gfo/Idh/MocA family. As to quaternary structure, homotretramer.

The catalysed reaction is D-xylofuranose + NADP(+) = D-xylono-1,4-lactone + NADPH + H(+). Its function is as follows. NADP-dependent D-xylose dehydrogenase involved in the degradation of D-xylose, a major component of hemicelluloses such as xylan. In addition to D-xylose, oxidizes D-ribose at similar kinetic constants, whereas D-glucose is oxidized with about 70-fold lower catalytic efficiency. The sequence is that of D-xylose 1-dehydrogenase [NADP(+)] (gfo6) from Haloarcula marismortui (strain ATCC 43049 / DSM 3752 / JCM 8966 / VKM B-1809) (Halobacterium marismortui).